A 163-amino-acid chain; its full sequence is Nucleotide-binding protein Ava_2001 (163 aa).

This sequence belongs to the YajQ family.

Its function is as follows. Nucleotide-binding protein. This is Nucleotide-binding protein Ava_2001 from Trichormus variabilis (strain ATCC 29413 / PCC 7937) (Anabaena variabilis).